The chain runs to 469 residues: Glutamate--tRNA ligase (469 aa).

The 'HIGH' region signature appears at 9–19; the sequence is PSPTGFLHVGG. Zn(2+) is bound by residues Cys98, Cys100, Cys125, and Asp127. Positions 236–240 match the 'KMSKS' region motif; it reads KLSKR. Lys239 provides a ligand contact to ATP.

This sequence belongs to the class-I aminoacyl-tRNA synthetase family. Glutamate--tRNA ligase type 1 subfamily. As to quaternary structure, monomer. Requires Zn(2+) as cofactor.

It is found in the cytoplasm. It carries out the reaction tRNA(Glu) + L-glutamate + ATP = L-glutamyl-tRNA(Glu) + AMP + diphosphate. Catalyzes the attachment of glutamate to tRNA(Glu) in a two-step reaction: glutamate is first activated by ATP to form Glu-AMP and then transferred to the acceptor end of tRNA(Glu). This chain is Glutamate--tRNA ligase, found in Shewanella woodyi (strain ATCC 51908 / MS32).